Here is a 904-residue protein sequence, read N- to C-terminus: DNA mismatch repair protein MutS (904 aa).

654 to 661 (GPNMAGKS) is a binding site for ATP.

This sequence belongs to the DNA mismatch repair MutS family.

This protein is involved in the repair of mismatches in DNA. It is possible that it carries out the mismatch recognition step. This protein has a weak ATPase activity. This Caulobacter sp. (strain K31) protein is DNA mismatch repair protein MutS.